A 568-amino-acid chain; its full sequence is O-fucosyltransferase 9 (568 aa).

The segment covering 1-19 has biased composition (low complexity); it reads MHGLSRLGNGSSNGRINIP. Residues 1–33 form a disordered region; the sequence is MHGLSRLGNGSSNGRINIPSPSPPSSPRIRHTR. The chain crosses the membrane as a helical; Signal-anchor for type II membrane protein span at residues 65 to 85; that stretch reads LLLAPLLYIAGMLLFMGSFGF. 4 N-linked (GlcNAc...) asparagine glycosylation sites follow: N125, N151, N189, and N243. Position 336 to 338 (336 to 338) interacts with substrate; it reads HLR. N-linked (GlcNAc...) asparagine glycans are attached at residues N408 and N409.

The protein belongs to the glycosyltransferase GT106 family.

The protein resides in the membrane. It functions in the pathway glycan metabolism. The chain is O-fucosyltransferase 9 from Arabidopsis thaliana (Mouse-ear cress).